Consider the following 115-residue polypeptide: MSNNYEMMYILRPDLSEEQVQEVSSKYKTMLQDSGASDLQVQVRGKRHLAYPIQNFNDGIYIQVNYKADGSQIKAVERDMRLGEMVIRYLTMKLDAEPIALEADAPPSEPAAPGA.

It belongs to the bacterial ribosomal protein bS6 family.

Binds together with bS18 to 16S ribosomal RNA. The polypeptide is Small ribosomal subunit protein bS6 (Picosynechococcus sp. (strain ATCC 27264 / PCC 7002 / PR-6) (Agmenellum quadruplicatum)).